The primary structure comprises 173 residues: Small ribosomal subunit protein uS5 (173 aa).

Residues 17-80 form the S5 DRBM domain; the sequence is LREKMIAVNR…EEARRNMVKV (64 aa).

The protein belongs to the universal ribosomal protein uS5 family. As to quaternary structure, part of the 30S ribosomal subunit. Contacts proteins S4 and S8.

Its function is as follows. With S4 and S12 plays an important role in translational accuracy. Located at the back of the 30S subunit body where it stabilizes the conformation of the head with respect to the body. The protein is Small ribosomal subunit protein uS5 of Acidovorax sp. (strain JS42).